Here is a 1233-residue protein sequence, read N- to C-terminus: DNA-directed RNA polymerase subunit beta' (1233 aa).

Residues C61, C63, C76, and C79 each coordinate Zn(2+). Mg(2+) contacts are provided by D455, D457, and D459. Zn(2+)-binding residues include C824, C898, C905, and C908. The span at 1211-1220 shows a compositional bias: basic and acidic residues; the sequence is ELQKAFDKEP. The disordered stretch occupies residues 1211–1233; that stretch reads ELQKAFDKEPASSTGNKASNSAK. Polar residues predominate over residues 1221-1233; it reads ASSTGNKASNSAK.

The protein belongs to the RNA polymerase beta' chain family. As to quaternary structure, the RNAP catalytic core consists of 2 alpha, 1 beta, 1 beta' and 1 omega subunit. When a sigma factor is associated with the core the holoenzyme is formed, which can initiate transcription. Requires Mg(2+) as cofactor. Zn(2+) serves as cofactor.

The enzyme catalyses RNA(n) + a ribonucleoside 5'-triphosphate = RNA(n+1) + diphosphate. DNA-dependent RNA polymerase catalyzes the transcription of DNA into RNA using the four ribonucleoside triphosphates as substrates. This Oenococcus oeni (strain ATCC BAA-331 / PSU-1) protein is DNA-directed RNA polymerase subunit beta'.